Here is a 465-residue protein sequence, read N- to C-terminus: tRNA (guanine(37)-N(1))-methyltransferase (465 aa).

S-adenosyl-L-methionine is bound by residues His189, 227–228, and 255–256; these read DL and DA. The interval 283–362 is disordered; that stretch reads YPKEGVPANE…GPGPPPSKPW (80 aa). Positions 291-320 are enriched in polar residues; it reads NENSSSNGNHNDVREGSQNGANESSVASTT. Residues 343–352 are compositionally biased toward basic residues; sequence TKRRNNKRVR. Asn371 is an S-adenosyl-L-methionine binding site.

The protein belongs to the class I-like SAM-binding methyltransferase superfamily. TRM5/TYW2 family. In terms of assembly, monomer.

Its subcellular location is the mitochondrion matrix. It localises to the nucleus. The protein localises to the cytoplasm. It catalyses the reaction guanosine(37) in tRNA + S-adenosyl-L-methionine = N(1)-methylguanosine(37) in tRNA + S-adenosyl-L-homocysteine + H(+). Functionally, specifically methylates the N1 position of guanosine-37 in various cytoplasmic and mitochondrial tRNAs. Methylation is not dependent on the nature of the nucleoside 5' of the target nucleoside. This is the first step in the biosynthesis of wybutosine (yW), a modified base adjacent to the anticodon of tRNAs and required for accurate decoding. The polypeptide is tRNA (guanine(37)-N(1))-methyltransferase (Sorghum bicolor (Sorghum)).